Here is a 261-residue protein sequence, read N- to C-terminus: 4-hydroxy-tetrahydrodipicolinate reductase (261 aa).

9 to 14 (GCLGRM) lines the NAD(+) pocket. Position 36 (Arg-36) interacts with NADP(+). NAD(+) is bound by residues 97-99 (GTT) and 118-121 (SANM). Residue His-151 is the Proton donor/acceptor of the active site. Residue His-152 participates in (S)-2,3,4,5-tetrahydrodipicolinate binding. Lys-155 acts as the Proton donor in catalysis. Residue 161–162 (GT) participates in (S)-2,3,4,5-tetrahydrodipicolinate binding.

Belongs to the DapB family.

It localises to the cytoplasm. The enzyme catalyses (S)-2,3,4,5-tetrahydrodipicolinate + NAD(+) + H2O = (2S,4S)-4-hydroxy-2,3,4,5-tetrahydrodipicolinate + NADH + H(+). The catalysed reaction is (S)-2,3,4,5-tetrahydrodipicolinate + NADP(+) + H2O = (2S,4S)-4-hydroxy-2,3,4,5-tetrahydrodipicolinate + NADPH + H(+). It functions in the pathway amino-acid biosynthesis; L-lysine biosynthesis via DAP pathway; (S)-tetrahydrodipicolinate from L-aspartate: step 4/4. Its function is as follows. Catalyzes the conversion of 4-hydroxy-tetrahydrodipicolinate (HTPA) to tetrahydrodipicolinate. This Wolbachia pipientis wMel protein is 4-hydroxy-tetrahydrodipicolinate reductase.